The chain runs to 64 residues: Large ribosomal subunit protein bL33c (64 aa).

Belongs to the bacterial ribosomal protein bL33 family.

The protein resides in the plastid. Its subcellular location is the chloroplast. The polypeptide is Large ribosomal subunit protein bL33c (Huperzia lucidula (Shining clubmoss)).